We begin with the raw amino-acid sequence, 121 residues long: Small ribosomal subunit protein uS13 (121 aa).

The disordered stretch occupies residues 94–121 (SLPVRGQNTKNNSRTRKGPRRTVANKKK). The span at 106–121 (SRTRKGPRRTVANKKK) shows a compositional bias: basic residues.

This sequence belongs to the universal ribosomal protein uS13 family. Part of the 30S ribosomal subunit. Forms a loose heterodimer with protein S19. Forms two bridges to the 50S subunit in the 70S ribosome.

Its function is as follows. Located at the top of the head of the 30S subunit, it contacts several helices of the 16S rRNA. In the 70S ribosome it contacts the 23S rRNA (bridge B1a) and protein L5 of the 50S subunit (bridge B1b), connecting the 2 subunits; these bridges are implicated in subunit movement. Contacts the tRNAs in the A and P-sites. The protein is Small ribosomal subunit protein uS13 of Exiguobacterium sp. (strain ATCC BAA-1283 / AT1b).